Consider the following 283-residue polypeptide: Small ribosomal subunit protein uS2 (283 aa).

Positions 229–283 (RSAGKSGEQPAEAEPMPDWERELLEGDGAKTEAKAEEPKAEAKKADEAPEAEKSN) are disordered. Basic and acidic residues predominate over residues 246–283 (DWERELLEGDGAKTEAKAEEPKAEAKKADEAPEAEKSN).

It belongs to the universal ribosomal protein uS2 family.

The polypeptide is Small ribosomal subunit protein uS2 (Cutibacterium acnes (strain DSM 16379 / KPA171202) (Propionibacterium acnes)).